Reading from the N-terminus, the 267-residue chain is D-aminoacyl-tRNA deacylase (267 aa).

The protein belongs to the DtdA deacylase family. As to quaternary structure, monomer. The cofactor is Zn(2+).

The enzyme catalyses a D-aminoacyl-tRNA + H2O = a tRNA + a D-alpha-amino acid + H(+). It catalyses the reaction glycyl-tRNA(Ala) + H2O = tRNA(Ala) + glycine + H(+). Its function is as follows. D-aminoacyl-tRNA deacylase with broad substrate specificity. By recycling D-aminoacyl-tRNA to D-amino acids and free tRNA molecules, this enzyme counteracts the toxicity associated with the formation of D-aminoacyl-tRNA entities in vivo. This Methanothrix thermoacetophila (strain DSM 6194 / JCM 14653 / NBRC 101360 / PT) (Methanosaeta thermophila) protein is D-aminoacyl-tRNA deacylase.